Consider the following 149-residue polypeptide: Nucleoside diphosphate kinase 1 (149 aa).

Position 1 is an N-acetylmethionine (Met1). ATP is bound by residues Lys9, Phe57, Arg85, Thr91, Arg102, and Asn112. His115 serves as the catalytic Pros-phosphohistidine intermediate.

Belongs to the NDK family. Interacts with CAT1, CAT2 and CAT3. Mg(2+) serves as cofactor.

The protein localises to the peroxisome. It is found in the nucleus. Its subcellular location is the cytoplasm. The catalysed reaction is a 2'-deoxyribonucleoside 5'-diphosphate + ATP = a 2'-deoxyribonucleoside 5'-triphosphate + ADP. The enzyme catalyses a ribonucleoside 5'-diphosphate + ATP = a ribonucleoside 5'-triphosphate + ADP. In terms of biological role, major role in the synthesis of nucleoside triphosphates other than ATP. The ATP gamma phosphate is transferred to the NDP beta phosphate via a ping-pong mechanism, using a phosphorylated active-site intermediate. Plays a role in response to reactive oxygen species (ROS) stress. The protein is Nucleoside diphosphate kinase 1 (NDK1) of Arabidopsis thaliana (Mouse-ear cress).